The following is a 525-amino-acid chain: GMP synthase [glutamine-hydrolyzing] (525 aa).

Residues 9–207 (RILILDFGSQ…VVDICKCEKL (199 aa)) form the Glutamine amidotransferase type-1 domain. Catalysis depends on Cys-86, which acts as the Nucleophile. Catalysis depends on residues His-181 and Glu-183. One can recognise a GMPS ATP-PPase domain in the interval 208 to 400 (WTSASIIDDA…LGLPYDMLYR (193 aa)). Residue 235 to 241 (SGGVDSS) coordinates ATP.

As to quaternary structure, homodimer.

The catalysed reaction is XMP + L-glutamine + ATP + H2O = GMP + L-glutamate + AMP + diphosphate + 2 H(+). Its pathway is purine metabolism; GMP biosynthesis; GMP from XMP (L-Gln route): step 1/1. Catalyzes the synthesis of GMP from XMP. In Colwellia psychrerythraea (strain 34H / ATCC BAA-681) (Vibrio psychroerythus), this protein is GMP synthase [glutamine-hydrolyzing].